We begin with the raw amino-acid sequence, 347 residues long: Protein POOR HOMOLOGOUS SYNAPSIS 1 (347 aa).

The protein localises to the cytoplasm. Functionally, required for accurate chromosome segregation in meiosis. Required for pairing to occur between homologous chromosomes. Acts in early recombination steps and ensures pairing fidelity and proper repair of meiotic DNA double-strand-breaks. Regulates recombination and pairing of homologous chromosomes during meiotic prophase by controlling transport of RAD50 from cytoplasm to the nucleus. May affect pairing of the gene-rich fraction of the genome rather than preventing pairing between repetitive DNA elements. The sequence is that of Protein POOR HOMOLOGOUS SYNAPSIS 1 from Zea mays (Maize).